Consider the following 883-residue polypeptide: Phosphoenolpyruvate carboxylase (883 aa).

Active-site residues include His-138 and Lys-546.

It belongs to the PEPCase type 1 family. Mg(2+) serves as cofactor.

The enzyme catalyses oxaloacetate + phosphate = phosphoenolpyruvate + hydrogencarbonate. In terms of biological role, forms oxaloacetate, a four-carbon dicarboxylic acid source for the tricarboxylic acid cycle. In Salmonella arizonae (strain ATCC BAA-731 / CDC346-86 / RSK2980), this protein is Phosphoenolpyruvate carboxylase.